A 408-amino-acid polypeptide reads, in one-letter code: Putative transporter AmpG 2 (408 aa).

A run of 12 helical transmembrane segments spans residues 10–30 (YISN…IYLL), 49–69 (IGLF…GPLL), 84–104 (YCLI…TNFN), 109–129 (FIPF…YDML), 154–174 (FRIG…IISW), 177–197 (VYRS…IYPL), 224–244 (WLII…LSIM), 261–281 (LGYK…GGFL), 294–311 (ALIY…LYFY), 315–337 (ITSL…SPFF), 353–373 (IALI…ISGY), and 378–398 (LGWT…YILI).

Belongs to the major facilitator superfamily.

Its subcellular location is the cell inner membrane. The polypeptide is Putative transporter AmpG 2 (ampG2) (Rickettsia felis (strain ATCC VR-1525 / URRWXCal2) (Rickettsia azadi)).